A 572-amino-acid polypeptide reads, in one-letter code: Proline--tRNA ligase (572 aa).

Belongs to the class-II aminoacyl-tRNA synthetase family. ProS type 1 subfamily. As to quaternary structure, homodimer.

It is found in the cytoplasm. The enzyme catalyses tRNA(Pro) + L-proline + ATP = L-prolyl-tRNA(Pro) + AMP + diphosphate. Functionally, catalyzes the attachment of proline to tRNA(Pro) in a two-step reaction: proline is first activated by ATP to form Pro-AMP and then transferred to the acceptor end of tRNA(Pro). As ProRS can inadvertently accommodate and process non-cognate amino acids such as alanine and cysteine, to avoid such errors it has two additional distinct editing activities against alanine. One activity is designated as 'pretransfer' editing and involves the tRNA(Pro)-independent hydrolysis of activated Ala-AMP. The other activity is designated 'posttransfer' editing and involves deacylation of mischarged Ala-tRNA(Pro). The misacylated Cys-tRNA(Pro) is not edited by ProRS. This chain is Proline--tRNA ligase, found in Escherichia coli (strain K12 / MC4100 / BW2952).